Consider the following 344-residue polypeptide: Cycloartenol-C-24-methyltransferase 1 (344 aa).

This sequence belongs to the class I-like SAM-binding methyltransferase superfamily. Erg6/SMT family.

The catalysed reaction is zymosterol + S-adenosyl-L-methionine = fecosterol + S-adenosyl-L-homocysteine + H(+). The protein operates within steroid biosynthesis; sterol biosynthesis. Functionally, catalyzes the methyl transfer from S-adenosyl-methionine to the C-24 of cycloartenol to form 24-methylene cycloartenol. This is Cycloartenol-C-24-methyltransferase 1 (Smt1-1) from Oryza sativa subsp. japonica (Rice).